Reading from the N-terminus, the 171-residue chain is Protein TIFY 11d (171 aa).

The Tify domain occupies Pro-65–Ser-100. Positions Pro-117–Tyr-142 match the Jas motif. The Nuclear localization signal motif lies at Ala-119 to Arg-126.

It belongs to the TIFY/JAZ family. Interacts with BHLH148 and COI1A. Interacts with COI1A, COI1B and COI2 in a coronatine-dependent manner. Coronatine is an analog of jasmonoyl isoleucine (JA-Ile). Ubiquitinated. Increase in jasmonoyl isoleucine (JA-Ile) levels mediates its degradation via COI1A-mediated proteasome pathway.

The protein resides in the nucleus. Functionally, repressor of jasmonate (JA) responses. May act on an initial response of JA-regulated gene expression toward drought tolerance as part of a BHLH148-TIFY11D/JAZ12-COI1A complex. This chain is Protein TIFY 11d, found in Oryza sativa subsp. japonica (Rice).